A 368-amino-acid polypeptide reads, in one-letter code: MWIKELELKHYRNYDHLLASFSSGLNVFIGNNAQGKTNFLEAIYFLSLTRSHRTRADKELIHFDHSTVSLTGKIQRISGTVDLEINLSDKGRVTKINALKQAKLSDYIGTMMVVLFAPEDLQLVKGAPSLRRKFIDIDLGQIKPVYLFELSHYNHVLKQRNSYLKSAQQIDAAFLAVLDEQLASYGARVMEHRIDFINALEKEANTHHQAISNGLESLSLSYQSSVVFDKKTSIYQQFLHQLEKNHQKDFFRKNTSVGPHRDDLAFYINGMNANFASQGQHRSLILSLKMAEVSLMKALTGDNPILLLDDVMSELDNTRQTKLLETVIKENVQTFITTTSLDHLSQLPEGIRIFHVTKGTVQVDSDIH.

An ATP-binding site is contributed by 30–37 (GNNAQGKT).

This sequence belongs to the RecF family.

It localises to the cytoplasm. The RecF protein is involved in DNA metabolism; it is required for DNA replication and normal SOS inducibility. RecF binds preferentially to single-stranded, linear DNA. It also seems to bind ATP. This Streptococcus pyogenes serotype M4 (strain MGAS10750) protein is DNA replication and repair protein RecF.